Consider the following 551-residue polypeptide: Tetrachloroethene reductive dehalogenase (551 aa).

The tat-type signal signal peptide spans 1–39; it reads MGEINRRNFLKASMLGAAAAAVASASVVKGVVSPLVADA. Residues 411-440 form the 4Fe-4S ferredoxin-type 1 domain; it reads PRKFGVREFCRLCKKCADACPAQAISHEKD. [4Fe-4S] cluster-binding residues include cysteine 420, cysteine 423, cysteine 426, cysteine 430, cysteine 467, cysteine 478, cysteine 481, and cysteine 485. The region spanning 478 to 496 is the 4Fe-4S ferredoxin-type 2 domain; sequence CSNCVAVCSWNKVETWNHD.

This sequence belongs to the PceA family. It depends on [4Fe-4S] cluster as a cofactor. Requires corrinoid as cofactor. In terms of processing, predicted to be exported by the Tat system. The position of the signal peptide cleavage has been experimentally proven.

The protein resides in the cell membrane. The catalysed reaction is trichloroethene + chloride + A + H(+) = tetrachloroethene + AH2. It carries out the reaction trichloroethene + AH2 = (Z)-1,2-dichloroethene + chloride + A + H(+). Functionally, catalyzes the reductive dechlorination of tetrachloroethene (PCE) to trichloroethene (TCE) and of trichloroethene to cis-1,2-dichloroethene (DCE). Reduced methyl viologen can act as the artificial electron donor. The protein is Tetrachloroethene reductive dehalogenase of Desulfitobacterium hafniense (Desulfitobacterium frappieri).